The following is a 352-amino-acid chain: Phenylalanine--tRNA ligase alpha subunit (352 aa).

E258 serves as a coordination point for Mg(2+).

This sequence belongs to the class-II aminoacyl-tRNA synthetase family. Phe-tRNA synthetase alpha subunit type 1 subfamily. As to quaternary structure, tetramer of two alpha and two beta subunits. Mg(2+) is required as a cofactor.

It localises to the cytoplasm. The enzyme catalyses tRNA(Phe) + L-phenylalanine + ATP = L-phenylalanyl-tRNA(Phe) + AMP + diphosphate + H(+). In Staphylococcus carnosus (strain TM300), this protein is Phenylalanine--tRNA ligase alpha subunit.